A 90-amino-acid polypeptide reads, in one-letter code: Cell division protein CrgA (90 aa).

A disordered region spans residues 1–25; sequence MPKARVTKNETAPVSSNPSANRTPV. Over residues 9–22 the composition is skewed to polar residues; it reads NETAPVSSNPSANR. 2 helical membrane passes run 38–58 and 67–87; these read VIMF…YLVG and LGAW…LMTM.

This sequence belongs to the CrgA family.

It is found in the cell membrane. Involved in cell division. The sequence is that of Cell division protein CrgA from Corynebacterium glutamicum (strain R).